The primary structure comprises 373 residues: Cystathionine gamma-synthase/O-acetylhomoserine (thiol)-lyase (373 aa).

Position 197 is an N6-(pyridoxal phosphate)lysine (Lys197).

It belongs to the trans-sulfuration enzymes family. As to quaternary structure, homotetramer. Pyridoxal 5'-phosphate is required as a cofactor.

The protein resides in the cytoplasm. The catalysed reaction is O-acetyl-L-homoserine + L-cysteine = L,L-cystathionine + acetate + H(+). It carries out the reaction O-acetyl-L-homoserine + hydrogen sulfide = L-homocysteine + acetate. It functions in the pathway amino-acid biosynthesis; L-methionine biosynthesis via de novo pathway. Catalyzes the formation of L-cystathionine from O-acetyl-L-homoserine and L-cysteine. Cannot use O-succinyl-L-homoserine as substrate. Also exhibits O-acetylhomoserine thiolyase activity, catalyzing the synthesis of L-homocysteine from O-acetyl-L-homoserine and sulfide. The sequence is that of Cystathionine gamma-synthase/O-acetylhomoserine (thiol)-lyase (metI) from Bacillus subtilis (strain 168).